Here is a 347-residue protein sequence, read N- to C-terminus: Olfactory receptor 2M2 (347 aa).

At 1 to 25 (MAWENQTFNSDFILLGIFNHSPPHT) the chain is on the extracellular side. N-linked (GlcNAc...) asparagine glycosylation occurs at N5. The helical transmembrane segment at 26-49 (FLFFLVLGIFLVAFMGNSVMVLLI) threads the bilayer. Residues 50–57 (YLDTQLHT) are Cytoplasmic-facing. The chain crosses the membrane as a helical span at residues 58-79 (PMYFLLSQLSLMDLMLICTTVP). The Extracellular segment spans residues 80 to 100 (KMAFNYLSGSKSISMAGCVTQ). C97 and C189 are oxidised to a cystine. The chain crosses the membrane as a helical span at residues 101-120 (IFFYISLSGSECFLLAVMAY). Topologically, residues 121-139 (DRYIAICHPLRYTNLMNPK) are cytoplasmic. Residues 140–158 (ICGLMATFSWILGSTDGII) form a helical membrane-spanning segment. At 159 to 195 (DAVATFSFSFCGSREIAHFFCEFPSLLILSCNDTSIF) the chain is on the extracellular side. A glycan (N-linked (GlcNAc...) asparagine) is linked at N190. Residues 196–219 (EEVIFICCIVMLVFPVAIIIASYA) form a helical membrane-spanning segment. The Cytoplasmic segment spans residues 220–236 (RVILAVIHMGSGEGRCK). Residues 237–259 (AFTTCSSHLMVVGMYYGAALFMY) form a helical membrane-spanning segment. At 260–272 (IRPTSDHSPTQDK) the chain is on the extracellular side. A helical transmembrane segment spans residues 273 to 292 (MVSVFYTILTPMLNPLIYSL). The Cytoplasmic segment spans residues 293 to 347 (RNKEVTRAFMKILGKGKSESELPHKLYVLLFAKFFFLISIFFYDVKILALIMYIA).

This sequence belongs to the G-protein coupled receptor 1 family.

The protein localises to the cell membrane. Its function is as follows. Odorant receptor. The chain is Olfactory receptor 2M2 (OR2M2) from Homo sapiens (Human).